Here is a 301-residue protein sequence, read N- to C-terminus: Bifunctional protein FolD (301 aa).

Residues 164-166, serine 191, and isoleucine 232 each bind NADP(+); that span reads GRS.

It belongs to the tetrahydrofolate dehydrogenase/cyclohydrolase family. In terms of assembly, homodimer.

It carries out the reaction (6R)-5,10-methylene-5,6,7,8-tetrahydrofolate + NADP(+) = (6R)-5,10-methenyltetrahydrofolate + NADPH. The enzyme catalyses (6R)-5,10-methenyltetrahydrofolate + H2O = (6R)-10-formyltetrahydrofolate + H(+). The protein operates within one-carbon metabolism; tetrahydrofolate interconversion. In terms of biological role, catalyzes the oxidation of 5,10-methylenetetrahydrofolate to 5,10-methenyltetrahydrofolate and then the hydrolysis of 5,10-methenyltetrahydrofolate to 10-formyltetrahydrofolate. This is Bifunctional protein FolD from Borrelia garinii subsp. bavariensis (strain ATCC BAA-2496 / DSM 23469 / PBi) (Borreliella bavariensis).